A 311-amino-acid polypeptide reads, in one-letter code: MEVIKISPRGYCYGVVDAMVLALRTAQNFDLPRPIHILGMIVHNAHVVEAFEKQGIKTLDGEDRLALLDQVQEGTIIFTAHGVSPEVRKKARDKGLTVVDATCPDVTKTHDLIREKVAEGYHVLYIGKKGHPEPEGAMGIAPDHVHLVQKLEELEALDLPTDKLIVTNQTTMSQWDVKHLMDAILKRFPGVEVHNEICLATQVRQEAVAEQVGEADLCIVVGDPRSNNSNRLAQVSEEIADVPSYRIADLFELDIEWLRGKKNVAVTSGASTPTPLTKEVITFLEQFDEFNPATWEKKRTVNMAKILPTVK.

Cys12 is a binding site for [4Fe-4S] cluster. Residues His43 and His81 each contribute to the (2E)-4-hydroxy-3-methylbut-2-enyl diphosphate site. Positions 43 and 81 each coordinate dimethylallyl diphosphate. Isopentenyl diphosphate-binding residues include His43 and His81. Position 103 (Cys103) interacts with [4Fe-4S] cluster. His131 provides a ligand contact to (2E)-4-hydroxy-3-methylbut-2-enyl diphosphate. Residue His131 participates in dimethylallyl diphosphate binding. An isopentenyl diphosphate-binding site is contributed by His131. The active-site Proton donor is Glu133. Thr170 contributes to the (2E)-4-hydroxy-3-methylbut-2-enyl diphosphate binding site. A [4Fe-4S] cluster-binding site is contributed by Cys198. Residues Ser226, Asn228, and Ser271 each coordinate (2E)-4-hydroxy-3-methylbut-2-enyl diphosphate. Ser226, Asn228, and Ser271 together coordinate dimethylallyl diphosphate. Residues Ser226, Asn228, and Ser271 each contribute to the isopentenyl diphosphate site.

Belongs to the IspH family. [4Fe-4S] cluster is required as a cofactor.

It catalyses the reaction isopentenyl diphosphate + 2 oxidized [2Fe-2S]-[ferredoxin] + H2O = (2E)-4-hydroxy-3-methylbut-2-enyl diphosphate + 2 reduced [2Fe-2S]-[ferredoxin] + 2 H(+). The enzyme catalyses dimethylallyl diphosphate + 2 oxidized [2Fe-2S]-[ferredoxin] + H2O = (2E)-4-hydroxy-3-methylbut-2-enyl diphosphate + 2 reduced [2Fe-2S]-[ferredoxin] + 2 H(+). Its pathway is isoprenoid biosynthesis; dimethylallyl diphosphate biosynthesis; dimethylallyl diphosphate from (2E)-4-hydroxy-3-methylbutenyl diphosphate: step 1/1. The protein operates within isoprenoid biosynthesis; isopentenyl diphosphate biosynthesis via DXP pathway; isopentenyl diphosphate from 1-deoxy-D-xylulose 5-phosphate: step 6/6. In terms of biological role, catalyzes the conversion of 1-hydroxy-2-methyl-2-(E)-butenyl 4-diphosphate (HMBPP) into a mixture of isopentenyl diphosphate (IPP) and dimethylallyl diphosphate (DMAPP). Acts in the terminal step of the DOXP/MEP pathway for isoprenoid precursor biosynthesis. The chain is 4-hydroxy-3-methylbut-2-enyl diphosphate reductase from Brevibacillus brevis (strain 47 / JCM 6285 / NBRC 100599).